Consider the following 235-residue polypeptide: Cytidylate kinase (235 aa).

16–24 (GPAASGKST) lines the ATP pocket.

This sequence belongs to the cytidylate kinase family. Type 1 subfamily.

The protein localises to the cytoplasm. It carries out the reaction CMP + ATP = CDP + ADP. It catalyses the reaction dCMP + ATP = dCDP + ADP. This chain is Cytidylate kinase, found in Chlorobaculum tepidum (strain ATCC 49652 / DSM 12025 / NBRC 103806 / TLS) (Chlorobium tepidum).